The chain runs to 274 residues: Rhamnulose-1-phosphate aldolase (274 aa).

Residue glutamate 117 is part of the active site. Zn(2+) is bound by residues histidine 141, histidine 143, and histidine 212.

This sequence belongs to the aldolase class II family. RhaD subfamily. In terms of assembly, homotetramer. It depends on Zn(2+) as a cofactor.

It is found in the cytoplasm. The enzyme catalyses L-rhamnulose 1-phosphate = (S)-lactaldehyde + dihydroxyacetone phosphate. It participates in carbohydrate degradation; L-rhamnose degradation; glycerone phosphate from L-rhamnose: step 3/3. In terms of biological role, catalyzes the reversible cleavage of L-rhamnulose-1-phosphate to dihydroxyacetone phosphate (DHAP) and L-lactaldehyde. The chain is Rhamnulose-1-phosphate aldolase from Escherichia fergusonii (strain ATCC 35469 / DSM 13698 / CCUG 18766 / IAM 14443 / JCM 21226 / LMG 7866 / NBRC 102419 / NCTC 12128 / CDC 0568-73).